Here is a 411-residue protein sequence, read N- to C-terminus: uncharacterized protein (411 aa).

The 180-residue stretch at 20 to 199 (FLYFDFDAFF…LPITEIPGIG (180 aa)) folds into the UmuC domain.

It belongs to the DNA polymerase type-Y family.

This is an uncharacterized protein from Mycoplasma genitalium (strain ATCC 33530 / DSM 19775 / NCTC 10195 / G37) (Mycoplasmoides genitalium).